The chain runs to 190 residues: ATP synthase subunit b (190 aa).

The helical transmembrane segment at 4–24 threads the bilayer; that stretch reads ILAPVLSLVLIAGVASPALAA.

The protein belongs to the ATPase B chain family. F-type ATPases have 2 components, F(1) - the catalytic core - and F(0) - the membrane proton channel. F(1) has five subunits: alpha(3), beta(3), gamma(1), delta(1), epsilon(1). F(0) has three main subunits: a(1), b(2) and c(10-14). The alpha and beta chains form an alternating ring which encloses part of the gamma chain. F(1) is attached to F(0) by a central stalk formed by the gamma and epsilon chains, while a peripheral stalk is formed by the delta and b chains.

Its subcellular location is the cell inner membrane. F(1)F(0) ATP synthase produces ATP from ADP in the presence of a proton or sodium gradient. F-type ATPases consist of two structural domains, F(1) containing the extramembraneous catalytic core and F(0) containing the membrane proton channel, linked together by a central stalk and a peripheral stalk. During catalysis, ATP synthesis in the catalytic domain of F(1) is coupled via a rotary mechanism of the central stalk subunits to proton translocation. Functionally, component of the F(0) channel, it forms part of the peripheral stalk, linking F(1) to F(0). The sequence is that of ATP synthase subunit b from Ruegeria pomeroyi (strain ATCC 700808 / DSM 15171 / DSS-3) (Silicibacter pomeroyi).